The following is a 291-amino-acid chain: Putative heme-binding peroxidase (291 aa).

H61 acts as the Proton acceptor in catalysis. Residue H185 participates in heme b binding. W201 acts as the Tryptophan radical intermediate in catalysis.

This sequence belongs to the peroxidase family. Cytochrome c peroxidase subfamily. Heme b is required as a cofactor.

Its function is as follows. Destroys radicals which are normally produced within the cells and which are toxic to biological systems. This is Putative heme-binding peroxidase (CCP2) from Candida albicans (strain SC5314 / ATCC MYA-2876) (Yeast).